Here is a 242-residue protein sequence, read N- to C-terminus: Beta-glucanase (242 aa).

Residues 1 to 28 form the signal peptide; the sequence is MPYLKRVLLLLVTGLFMSLFAVTATASA. A Pyrrolidone carboxylic acid modification is found at Q29. The GH16 domain maps to 29 to 242; sequence QTGGSFFDPF…HYDWVRYTKK (214 aa). An intrachain disulfide couples C60 to C89. Residue E133 is the Nucleophile of the active site. Residue E137 is the Proton donor of the active site.

It belongs to the glycosyl hydrolase 16 family.

The protein resides in the secreted. The enzyme catalyses Hydrolysis of (1-&gt;4)-beta-D-glucosidic linkages in beta-D-glucans containing (1-&gt;3)- and (1-&gt;4)-bonds.. In Bacillus subtilis (strain 168), this protein is Beta-glucanase (bglS).